The sequence spans 349 residues: Beta-hexosaminidase (349 aa).

Substrate-binding positions include Asp-64, Arg-72, Arg-138, and 168 to 169 (KH). Catalysis depends on His-181, which acts as the Proton donor/acceptor. The Nucleophile role is filled by Asp-252.

Belongs to the glycosyl hydrolase 3 family. NagZ subfamily.

The protein localises to the cytoplasm. It carries out the reaction Hydrolysis of terminal non-reducing N-acetyl-D-hexosamine residues in N-acetyl-beta-D-hexosaminides.. Its pathway is cell wall biogenesis; peptidoglycan recycling. In terms of biological role, plays a role in peptidoglycan recycling by cleaving the terminal beta-1,4-linked N-acetylglucosamine (GlcNAc) from peptide-linked peptidoglycan fragments, giving rise to free GlcNAc, anhydro-N-acetylmuramic acid and anhydro-N-acetylmuramic acid-linked peptides. This is Beta-hexosaminidase from Methylobacillus flagellatus (strain ATCC 51484 / DSM 6875 / VKM B-1610 / KT).